The primary structure comprises 884 residues: Lon protease homolog 2, peroxisomal (884 aa).

In terms of domain architecture, Lon N-terminal spans 12-255 (LAILPFRNKV…KATELVDRHL (244 aa)). Positions 67 to 101 (SLLSPGVGSDSGEGGSKAPGGSAGESTKQDTKNGK) are disordered. Residues 75 to 89 (SDSGEGGSKAPGGSA) show a composition bias toward gly residues. 408-415 (GPPGVGKT) contributes to the ATP binding site. The 186-residue stretch at 689-874 (VASPGVSVGL…EEVLDHAFEG (186 aa)) folds into the Lon proteolytic domain. Catalysis depends on residues S780 and K823. The short motif at 882–884 (SKL) is the Microbody targeting signal element.

It belongs to the peptidase S16 family. Expressed in roots, leaves and panicles.

The protein resides in the peroxisome matrix. The catalysed reaction is Hydrolysis of proteins in presence of ATP.. ATP-dependent serine protease that mediates the selective degradation of misfolded and unassembled polypeptides in the peroxisomal matrix. Necessary for type 2 peroxisome targeting signal (PTS2)-containing protein processing and facilitates peroxisome matrix protein import. This chain is Lon protease homolog 2, peroxisomal (LON1), found in Oryza sativa subsp. indica (Rice).